We begin with the raw amino-acid sequence, 81 residues long: Large ribosomal subunit protein bL31 (81 aa).

The Zn(2+) site is built by cysteine 16, cysteine 18, cysteine 36, and cysteine 39.

It belongs to the bacterial ribosomal protein bL31 family. Type A subfamily. Part of the 50S ribosomal subunit. The cofactor is Zn(2+).

Binds the 23S rRNA. The chain is Large ribosomal subunit protein bL31 from Rhodopirellula baltica (strain DSM 10527 / NCIMB 13988 / SH1).